The sequence spans 1366 residues: DNA-directed RNA polymerase subunit beta' (1366 aa).

The segment covering Met-1 to Lys-20 has biased composition (basic residues). Positions Met-1 to Phe-37 are disordered. Zn(2+) is bound by residues Cys-248, Cys-315, Cys-322, and Cys-325. The segment at Thr-1292–Glu-1366 is disordered. Residues Leu-1354 to Glu-1366 are compositionally biased toward low complexity.

The protein belongs to the RNA polymerase beta' chain family. RpoC2 subfamily. In cyanobacteria the RNAP catalytic core is composed of 2 alpha, 1 beta, 1 beta', 1 gamma and 1 omega subunit. When a sigma factor is associated with the core the holoenzyme is formed, which can initiate transcription. The cofactor is Zn(2+).

It carries out the reaction RNA(n) + a ribonucleoside 5'-triphosphate = RNA(n+1) + diphosphate. DNA-dependent RNA polymerase catalyzes the transcription of DNA into RNA using the four ribonucleoside triphosphates as substrates. The protein is DNA-directed RNA polymerase subunit beta' of Prochlorococcus marinus (strain MIT 9215).